The chain runs to 368 residues: MRFVDEATITVRAGNGGNGCVSFRREKFVPRGGPDGGDGGDGGSVILRASNRLLSLYDFRLQRNYEAPNGQGGMGSQCHGRKGDDLTVELPVGTQIYEVTEDGETLLCDLSDPETVFVVAQGGRGGKGNEHFKSSTNRAPRFAQKGETGEVRSLRLELKILADAGLLGLPNAGKSTFISKVSAARPKIAAYPFTTLIPNLGVMIDDADPEQRLVIADIPGLIEGAHTGQGLGHRFLKHVERTRFLVHILSVEDVSLDSPDGPWSGFDLINEELVRFDADLGQRVQLQVVNKIDLRDPEDVQALRDRAAADGRTVHFMSALTGEGVEDVVAEMWRMRDELDIHEALVRLRETEEFDEEESDIEVIWVRE.

An Obg domain is found at 1-161; the sequence is MRFVDEATIT…RSLRLELKIL (161 aa). Positions 162-337 constitute an OBG-type G domain; it reads ADAGLLGLPN…VVAEMWRMRD (176 aa). GTP contacts are provided by residues 168-175, 193-197, 217-220, 290-293, and 318-320; these read GLPNAGKS, FTTLI, DIPG, NKID, and SAL. Mg(2+) contacts are provided by serine 175 and threonine 195.

This sequence belongs to the TRAFAC class OBG-HflX-like GTPase superfamily. OBG GTPase family. As to quaternary structure, monomer. Requires Mg(2+) as cofactor.

It is found in the cytoplasm. In terms of biological role, an essential GTPase which binds GTP, GDP and possibly (p)ppGpp with moderate affinity, with high nucleotide exchange rates and a fairly low GTP hydrolysis rate. Plays a role in control of the cell cycle, stress response, ribosome biogenesis and in those bacteria that undergo differentiation, in morphogenesis control. This chain is GTPase Obg, found in Nitratidesulfovibrio vulgaris (strain DSM 19637 / Miyazaki F) (Desulfovibrio vulgaris).